The sequence spans 741 residues: MAPGRELGAFLLALLAFCGGRRLAEAAGGPGGRRGAAADACGGRGLSSVTKSNGLLNITFKYDNCTPYLNSVGKHVIGDVQNITISQYACYEQVAVTILWTANAIGIEYLRGFRVILEELKSEGRQCQQMVLRDPKQLSPSFKRTGMESNPFANLKFETDYFVKIVPFPSIKNESNYHPFFFRTRPCELLLQPENLICKPYWKPRNLNVTQQGFNMQVSFDHAPHNFGFRYYFLHYKLKHEGPFKQKTCKQDQNTDTTSCILQNVTPGDYIIELVDDTNTTRKTMHYALKPVHSPWAGPIRAIAITVPLVVISAFATLFTVMCRKKQQENIYSHLDEESSESSAYGAGLPVERLRPRPKVFICYSSKDCQKHINVIQCFAYFLQDFCGCEVALDLWEDLKICKESQKEWLIKKINESQFIIIVCSKGMKYFVEKKNWKHRGVTKDTGKGELFLFAVFTVAEKLRQAKQNSNDLCKFIAVYFDYSCEGDIPGILDLSTKYKLMDNLPQLYSHLHSRDLSVQDSEVFPVNVSKRNYFRSKSGRSLYVAICNMHQFIDQEPDWFEKQFIPFLPHPLHYSEPVMEKFDSGLVLNDLVNKQAADDDFYLKTDVNIISAGSSDSHCIIQHLNLGEDVETQDIQRGGSSVLRPLLHAVKASNLKDMPRDSGIYDSSVPSSELSLPLMEGLLTDQTETSSITGSVSSSSGLGEEEPPVITSTKFLLPGICKAELHCHIHTDELQAIAPL.

Positions 1 to 26 are cleaved as a signal peptide; that stretch reads MAPGRELGAFLLALLAFCGGRRLAEA. At 27-301 the chain is on the extracellular side; that stretch reads AGGPGGRRGA…VHSPWAGPIR (275 aa). 5 N-linked (GlcNAc...) asparagine glycosylation sites follow: Asn-57, Asn-82, Asn-173, Asn-208, and Asn-279. A helical transmembrane segment spans residues 302–322; that stretch reads AIAITVPLVVISAFATLFTVM. Residues 323-741 are Cytoplasmic-facing; it reads CRKKQQENIY…TDELQAIAPL (419 aa). One can recognise an SEFIR domain in the interval 357-510; it reads RPKVFICYSS…LMDNLPQLYS (154 aa). Residues 688–703 show a composition bias toward low complexity; it reads TETSSITGSVSSSSGL. The tract at residues 688 to 708 is disordered; that stretch reads TETSSITGSVSSSSGLGEEEP.

Its subcellular location is the membrane. In terms of biological role, feedback inhibitor of fibroblast growth factor mediated Ras-MAPK signaling and ERK activation. May inhibit FGF-induced FGFR1 tyrosine phosphorylation. Inhibits TGFB-induced epithelial-to-mesenchymal transition in lens epithelial cells. In Gallus gallus (Chicken), this protein is Interleukin-17 receptor D (IL17RD).